The sequence spans 309 residues: Probable RuBisCO transcriptional regulator (309 aa).

One can recognise an HTH lysR-type domain in the interval 6-63 (FTLDQLRILKAIVKEGSFKRAADSLYVSQPAISLQIQNLEKQLNIPLFERSNKKATLT). The segment at residues 23–42 (FKRAADSLYVSQPAISLQIQ) is a DNA-binding region (H-T-H motif).

Belongs to the LysR transcriptional regulatory family.

It is found in the plastid. The protein localises to the chloroplast. Functionally, trans-acting transcriptional regulator of RuBisCO genes (rbcL and rbcS) expression. The protein is Probable RuBisCO transcriptional regulator (rbcR) of Gracilaria tenuistipitata var. liui (Red alga).